We begin with the raw amino-acid sequence, 461 residues long: D-phenylhydantoinase (461 aa).

Residues His-59, His-61, and Lys-151 each contribute to the a divalent metal cation site. Residue Lys-151 is modified to N6-carboxylysine. Tyr-156 contacts substrate. Residues His-182 and His-239 each contribute to the a divalent metal cation site. Ser-286 provides a ligand contact to substrate. Asp-313 contributes to the a divalent metal cation binding site. A substrate-binding site is contributed by Asn-335.

It belongs to the metallo-dependent hydrolases superfamily. Hydantoinase/dihydropyrimidinase family. As to quaternary structure, homotetramer. The cofactor is a divalent metal cation. In terms of processing, carboxylation allows a single lysine to coordinate two divalent metal cations.

The enzyme catalyses D-5-phenylhydantoin + H2O = N-carbamoyl-D-phenylglycine + H(+). Its function is as follows. Catalyzes the stereospecific hydrolysis of the cyclic amide bond of D-hydantoin derivatives with an aromatic side chains at the 5'-position. Has no activity on dihydropyrimidines. The physiological function is unknown. This Escherichia coli (strain SE11) protein is D-phenylhydantoinase.